The following is a 387-amino-acid chain: Hydroxycarboxylic acid receptor 3 (387 aa).

At 1 to 28 the chain is on the extracellular side; that stretch reads MNRHHLQDHFLEIDKKNCCVFRDDFIAK. Residues 29 to 50 form a helical membrane-spanning segment; it reads VLPPVLGLEFIFGLLGNGLALW. Residues 51–63 lie on the Cytoplasmic side of the membrane; sequence IFCFHLKSWKSSR. Residues 64-85 form a helical membrane-spanning segment; the sequence is IFLFNLAVADFLLIICLPFVMD. Residues 86-102 lie on the Extracellular side of the membrane; it reads YYVRRSDWKFGDIPCRL. Cys100 and Cys177 are oxidised to a cystine. Residues 103–123 form a helical membrane-spanning segment; it reads VLFMFAMNRQGSIIFLTVVAV. Residues 124–142 lie on the Cytoplasmic side of the membrane; that stretch reads DRYFRVVHPHHALNKISNW. The chain crosses the membrane as a helical span at residues 143-163; sequence TAAIISCLLWGITVGLTVHLL. At 164–194 the chain is on the extracellular side; it reads KKKLLIQNGTANVCISFSICHTFRWHEAMFL. The helical transmembrane segment at 195–209 threads the bilayer; sequence LEFFLPLGIILFCSA. Over 210-236 the chain is Cytoplasmic; that stretch reads RIIWSLRQRQMDRHAKIKRAITFIMVV. The helical transmembrane segment at 237-256 threads the bilayer; sequence AIVFVICFLPSVVVRIHIFW. Residues 257-273 lie on the Extracellular side of the membrane; sequence LLHTSGTQNCEVYRSVD. The helical transmembrane segment at 274 to 298 threads the bilayer; sequence LAFFITLSFTYMNSMLDPVVYYFSS. The Cytoplasmic segment spans residues 299-387; the sequence is PSFPNFFSTL…LEKQLGCCIE (89 aa). The interval 319–343 is disordered; that stretch reads GEPDNNRSTSVELTGDPNKTRGAPE.

Belongs to the G-protein coupled receptor 1 family. Expression largely restricted to adipose tissue and spleen.

The protein resides in the cell membrane. Its function is as follows. Receptor for 3-OH-octanoid acid mediates a negative feedback regulation of adipocyte lipolysis to counteract prolipolytic influences under conditions of physiological or pathological increases in beta-oxidation rates. Acts as a low affinity receptor for nicotinic acid. This pharmacological effect requires nicotinic acid doses that are much higher than those provided by a normal diet. The chain is Hydroxycarboxylic acid receptor 3 (HCAR3) from Homo sapiens (Human).